Here is a 218-residue protein sequence, read N- to C-terminus: Large ribosomal subunit protein bL25 (218 aa).

Residues 186–218 (AVEEEVPAEDEEIMPEPEVIGEEDEGDEEEPEE) are disordered.

Belongs to the bacterial ribosomal protein bL25 family. CTC subfamily. As to quaternary structure, part of the 50S ribosomal subunit; part of the 5S rRNA/L5/L18/L25 subcomplex. Contacts the 5S rRNA. Binds to the 5S rRNA independently of L5 and L18.

Its function is as follows. This is one of the proteins that binds to the 5S RNA in the ribosome where it forms part of the central protuberance. The sequence is that of Large ribosomal subunit protein bL25 from Halothermothrix orenii (strain H 168 / OCM 544 / DSM 9562).